An 87-amino-acid polypeptide reads, in one-letter code: Defensin alpha-like protein 1 (87 aa).

An N-terminal signal peptide occupies residues 1-19 (MKTLILLSALVLLALQVQA). Residues 20 to 56 (DPIQEAEEETKTEEQPADEDQDVSVSFEGPEASAVQD) constitute a propeptide that is removed on maturation. Over residues 23 to 41 (QEAEEETKTEEQPADEDQD) the composition is skewed to acidic residues. The interval 23-43 (QEAEEETKTEEQPADEDQDVS) is disordered.

It belongs to the alpha-defensin family. Antiparallel homodimer; disulfide-linked. In terms of tissue distribution, specifically expressed in small intestine (jejunum and ileum). Probably expressed by Paneth cells at the base of intestinal crypts. Coexpressed with MMP7 in small intestine.

It is found in the secreted. Its function is as follows. Intestinal defense peptide. Has potent antibacterial activity against Gram-negative bacteria E.coli O157:H7, S.typhimurium DT104, and K.pneumoniae; and against Gram-positive bacteria S.aureus, methicillin-resistant S.aureus and L.monocytogenes. Remains active in the presence of NaCl and Mg(2+). Probably functions by disrupting bacterial membrane integrity. However, does not show cytotoxic activity towards human intestinal cells. In Rattus norvegicus (Rat), this protein is Defensin alpha-like protein 1.